We begin with the raw amino-acid sequence, 867 residues long: Armadillo repeat-containing protein 2 (867 aa).

2 disordered regions span residues 1–115 and 214–252; these read MLSP…CFSF and TSLP…AVPK. Polar residues-rich tracts occupy residues 18-28, 40-50, and 60-69; these read PSVSKQKTSAE, VRTQRPFTPQE, and SSRTSENRPP. Low complexity-rich tracts occupy residues 70–81 and 234–243; these read SSFSLHASSFES and SSCPSSSDLS. 12 ARM repeats span residues 262-301, 304-344, 363-403, 408-449, 462-503, 506-547, 551-589, 591-616, 619-662, 664-705, 707-746, and 748-790; these read IEVD…HALE, NMLG…ALKV, EKND…SIKF, LGFL…HLLV, SLVR…KLTS, DCCT…NLTA, QARE…QRGE, HRAQ…NIAI, GVGP…NLSY, QVKN…NLSQ, HDVC…NLTV, and KDKR…NFSE.

As to expression, expressed at higher level in testis.

Functionally, required for sperm flagellum axoneme organization and function. Involved in axonemal central pair complex assembly and/or stability. This chain is Armadillo repeat-containing protein 2, found in Homo sapiens (Human).